A 114-amino-acid chain; its full sequence is uncharacterized protein (114 aa).

Basic and acidic residues predominate over residues 1 to 20 (MGLSRWHDKNSRPAEEKSEE). Residues 1 to 22 (MGLSRWHDKNSRPAEEKSEEMQ) are disordered.

In terms of biological role, may be involved in phosphatase regulation and/or generation of precursor metabolites and energy. This is an uncharacterized protein from Saccharomyces cerevisiae (strain ATCC 204508 / S288c) (Baker's yeast).